Reading from the N-terminus, the 589-residue chain is Progranulin (589 aa).

An N-terminal signal peptide occupies residues 1–17 (MWVLMSWLAFAAGLVAG). N-linked (GlcNAc...) asparagine glycosylation occurs at N38. 2 disulfides stabilise this stretch: C125/C138 and C132/C148. N263 is a glycosylation site (N-linked (GlcNAc...) asparagine). Intrachain disulfides connect C282–C294, C288–C304, C295–C312, C305–C319, C313–C326, C320–C333, C364–C376, C370–C386, C395–C408, and C402–C414. N373 is a glycosylation site (N-linked (GlcNAc...) asparagine). N526 carries an N-linked (GlcNAc...) asparagine glycan.

This sequence belongs to the granulin family. As to quaternary structure, progranulin is secreted as a homodimer. Interacts with SLPI; interaction protects progranulin from proteolysis. Interacts (via region corresponding to granulin-7 peptide) with CTSD; stabilizes CTSD and increases its proteolytic activity. Interacts (via region corresponding to granulin-7 peptide) with SORT1; this interaction mediates endocytosis and lysosome delivery of progranulin; interaction occurs at the neuronal cell surface in a stressed nervous system. Interacts with PSAP; facilitates lysosomal delivery of progranulin from the extracellular space and the biosynthetic pathway. Forms a complex with PSAP and M6PR; PSAP bridges the binding between progranulin and M6PR. Forms a complex with PSAP and SORT1; progranulin bridges the interaction between PSAP and SORT1; facilitates lysosomal targeting of PSAP via SORT1; interaction enhances PSAP uptake in primary cortical neurons. Interacts (via regions corresponding to granulin-2 and granulin-7 peptides) with GBA1; this interaction prevents aggregation of GBA1-SCARB2 complex via interaction with HSPA1A upon stress. Interacts (via region corresponding to granulin-7 peptide) with HSPA1A; mediates recruitment of HSPA1A to GBA1 and prevents GBA1 aggregation in response to stress. In terms of processing, N-glycosylated. Cleaved by ELANE; proteolysis is blocked by SLPI and is concentration- and time-dependent and induces CXCL8/IL-8 production; granulin-3 and granulin-4 are resistant to ELANE. Cleaved by CTSL in lysosome thus regulating the maturation and turnover of progranulin within the lysosome. In terms of tissue distribution, highly expressed at the wound site and diminishes away from the wound. Not expressed in fibroblasts and endothelial cells in intact skin. In adult brain, expressed primarily in neurons and in resting and reactive microglia. Expressed in both neurons and microglia. Highly expressed in activated microglia in response to injury. Expressed in macrophage.

Its subcellular location is the secreted. It is found in the lysosome. Secreted protein that acts as a key regulator of lysosomal function and as a growth factor involved in inflammation, wound healing and cell proliferation. Regulates protein trafficking to lysosomes, and also the activity of lysosomal enzymes. Also facilitates the acidification of lysosomes, causing degradation of mature CTSD by CTSB. In addition, functions as a wound-related growth factor that acts directly on dermal fibroblasts and endothelial cells to promote division, migration and the formation of capillary-like tubule structures. Also promotes epithelial cell proliferation by blocking TNF-mediated neutrophil activation preventing release of oxidants and proteases. Moreover, modulates inflammation in neurons by preserving neurons survival, axonal outgrowth and neuronal integrity. In terms of biological role, inhibits epithelial cell proliferation and induces epithelial cells to secrete IL-8. Its function is as follows. Stabilizes CTSD through interaction with CTSD leading to maintain its aspartic-type peptidase activity. In Mus musculus (Mouse), this protein is Progranulin (Grn).